A 278-amino-acid polypeptide reads, in one-letter code: Undecaprenyl-diphosphatase 1 (278 aa).

7 helical membrane-spanning segments follow: residues 46–66 (VVGF…VYFF), 91–111 (YTFT…GLAA), 119–139 (LASL…MWFA), 153–173 (SLPD…FPGF), 191–211 (VAAT…AGLY), 225–245 (PLAV…AWLL), and 256–276 (FIIY…GGAI).

The protein belongs to the UppP family.

Its subcellular location is the cell membrane. It catalyses the reaction di-trans,octa-cis-undecaprenyl diphosphate + H2O = di-trans,octa-cis-undecaprenyl phosphate + phosphate + H(+). Functionally, catalyzes the dephosphorylation of undecaprenyl diphosphate (UPP). Confers resistance to bacitracin. This Frankia alni (strain DSM 45986 / CECT 9034 / ACN14a) protein is Undecaprenyl-diphosphatase 1.